Consider the following 335-residue polypeptide: Pro-cathepsin H (335 aa).

A signal peptide spans 1-22 (MWAVLSLLCAGAWLLGPPACGA). Positions 23-97 (SNLAVSSFEK…DEIRHKYLWS (75 aa)) are excised as a propeptide. N-linked (GlcNAc...) asparagine glycans are attached at residues asparagine 72 and asparagine 101. Intrachain disulfides connect cysteine 102–cysteine 327, cysteine 138–cysteine 181, cysteine 172–cysteine 214, and cysteine 272–cysteine 322. Positions 107–115 (GNYLRGTGP) are excised as a propeptide. Cysteine 141 is an active-site residue. Residue asparagine 230 is glycosylated (N-linked (GlcNAc...) asparagine). Catalysis depends on residues histidine 281 and asparagine 301.

It belongs to the peptidase C1 family. As to quaternary structure, composed of cathepsin H and mini chain; disulfide-linked. Cathepsin H may be split into heavy and light chain. All chains are held together by disulfide bonds.

Its subcellular location is the lysosome. It carries out the reaction Hydrolysis of proteins, acting as an aminopeptidase (notably, cleaving Arg-|-Xaa bonds) as well as an endopeptidase.. In terms of biological role, important for the overall degradation of proteins in lysosomes. This is Pro-cathepsin H (CTSH) from Sus scrofa (Pig).